Here is a 504-residue protein sequence, read N- to C-terminus: Cytochrome P450 4A2 (504 aa).

The propeptide occupies 1–4; sequence MGFS. E315 provides a ligand contact to heme. S434 carries the post-translational modification Phosphoserine. C451 contacts heme.

The protein belongs to the cytochrome P450 family. Heme is required as a cofactor.

The protein localises to the endoplasmic reticulum membrane. It is found in the microsome membrane. It carries out the reaction an omega-methyl-long-chain fatty acid + reduced [NADPH--hemoprotein reductase] + O2 = an omega-hydroxy-long-chain fatty acid + oxidized [NADPH--hemoprotein reductase] + H2O + H(+). It catalyses the reaction dodecanoate + reduced [NADPH--hemoprotein reductase] + O2 = (11R)-hydroxydodecanoate + oxidized [NADPH--hemoprotein reductase] + H2O + H(+). The enzyme catalyses dodecanoate + reduced [NADPH--hemoprotein reductase] + O2 = 12-hydroxydodecanoate + oxidized [NADPH--hemoprotein reductase] + H2O + H(+). The catalysed reaction is tetradecanoate + reduced [NADPH--hemoprotein reductase] + O2 = 14-hydroxytetradecanoate + oxidized [NADPH--hemoprotein reductase] + H2O + H(+). It carries out the reaction hexadecanoate + reduced [NADPH--hemoprotein reductase] + O2 = 16-hydroxyhexadecanoate + oxidized [NADPH--hemoprotein reductase] + H2O + H(+). Its pathway is lipid metabolism; fatty acid metabolism. A cytochrome P450 monooxygenase that catalyzes omega and omega-1 hydroxylation of saturated fatty acids. Exhibits preferential omega versus omega-1 regioselectivity and (R) versus (S) stereoselectivity for hydroxylation of lauric and myristic acids. Has low activity toward palmitic acid. Mechanistically, uses molecular oxygen inserting one oxygen atom into a substrate, and reducing the second into a water molecule, with two electrons provided by NADPH via cytochrome P450 reductase (CPR; NADPH-ferrihemoprotein reductase). The protein is Cytochrome P450 4A2 of Rattus norvegicus (Rat).